A 157-amino-acid polypeptide reads, in one-letter code: 2-C-methyl-D-erythritol 2,4-cyclodiphosphate synthase (157 aa).

A divalent metal cation-binding residues include Asp8 and His10. Residues Asp8–His10 and His34–Ser35 contribute to the 4-CDP-2-C-methyl-D-erythritol 2-phosphate site. His42 is a binding site for a divalent metal cation. 4-CDP-2-C-methyl-D-erythritol 2-phosphate contacts are provided by residues Asp56–Gly58, Phe61–Asp65, Ala100–Ala106, Thr132–Glu135, Phe139, and Arg142.

Belongs to the IspF family. As to quaternary structure, homotrimer. Requires a divalent metal cation as cofactor.

The enzyme catalyses 4-CDP-2-C-methyl-D-erythritol 2-phosphate = 2-C-methyl-D-erythritol 2,4-cyclic diphosphate + CMP. It functions in the pathway isoprenoid biosynthesis; isopentenyl diphosphate biosynthesis via DXP pathway; isopentenyl diphosphate from 1-deoxy-D-xylulose 5-phosphate: step 4/6. In terms of biological role, involved in the biosynthesis of isopentenyl diphosphate (IPP) and dimethylallyl diphosphate (DMAPP), two major building blocks of isoprenoid compounds. Catalyzes the conversion of 4-diphosphocytidyl-2-C-methyl-D-erythritol 2-phosphate (CDP-ME2P) to 2-C-methyl-D-erythritol 2,4-cyclodiphosphate (ME-CPP) with a corresponding release of cytidine 5-monophosphate (CMP). The protein is 2-C-methyl-D-erythritol 2,4-cyclodiphosphate synthase of Pseudomonas aeruginosa (strain ATCC 15692 / DSM 22644 / CIP 104116 / JCM 14847 / LMG 12228 / 1C / PRS 101 / PAO1).